Reading from the N-terminus, the 367-residue chain is Voltage-gated potassium channel subunit beta-2 (367 aa).

Residues Ser9, Ser14, and Ser20 each carry the phosphoserine modification. Arg28 carries the post-translational modification Asymmetric dimethylarginine; alternate. Arg28 is subject to Omega-N-methylarginine; alternate. Ser31 bears the Phosphoserine mark. NADP(+)-binding residues include Thr56, Trp57, Gln63, and Asp85. Tyr90 serves as the catalytic Proton donor/acceptor. Ser112 bears the Phosphoserine mark. N6-acetyllysine is present on Lys124. NADP(+) is bound by residues Asn158, Ser188, Arg189, Gln214, Trp243, Ser244, Pro245, Leu246, Ala247, Cys248, Lys254, Tyr262, Arg264, Gly323, Ser325, Gln329, Glu332, and Asn333.

This sequence belongs to the shaker potassium channel beta subunit family. Homotetramer. Interaction with tetrameric potassium channel alpha subunits gives rise to a heterooctamer. Identified in potassium channel complexes containing KCNA1, KCNA2, KCNA4, KCNA5, KCNA6, KCNAB1, KCNAB2 and KCND3. Interacts (in unphosphorylated form) with MAPRE1. Forms a ternary complex with SQSTM1 and PRKCZ. Phosphorylated by PRKCZ; may be regulated by incorporation in a complex composed of PRKCZ and SQSTM1. As to expression, detected in brain. Detected at basket cell terminals in cerebellum and in the juxtaparanodal region of nodes of Ranvier (at protein level). Strongest expression in brain and eye. Highest levels in brain detected in brainstem and diencephalon. Strong expression also detected in lung and heart. Moderate expression in kidney, T-lymphocytes and skeletal muscle.

It localises to the cytoplasm. It is found in the membrane. The protein resides in the cell membrane. Its subcellular location is the cell projection. The protein localises to the axon. It localises to the synapse. It is found in the synaptosome. The protein resides in the cytoskeleton. The catalysed reaction is hydroxyacetone + NADP(+) = methylglyoxal + NADPH + H(+). It carries out the reaction (E)-4-oxonon-2-en-1-ol + NADP(+) = (E)-4-oxonon-2-enal + NADPH + H(+). Functionally, regulatory subunit of the voltage-gated potassium (Kv) Shaker channel family. Shaker channels are composed of pore-forming and potassium-conducting alpha subunits and of regulatory beta subunits. The beta-2/KCNAB2 subunit promotes potassium channel closure via a mechanism that does not involve physical obstruction of the channel pore. Promotes the inactivation of Kv1.4/KCNA4 and Kv1.5/KCNA5 alpha subunit-containing channels. Displays nicotinamide adenine dinucleotide phosphate (NADPH)-dependent aldoketoreductase activity by catalyzing the NADPH-dependent reduction of a wide range of aldehyde and ketone substrates. Substrate specificity includes methylglyoxal, 9,10-phenanthrenequinone, prostaglandin J2, 4-nitrobenzaldehyde, 4-nitroacetophenone and 4-oxo-trans-2-nonenal (in vitro, no physiological substrate identified yet). The binding of oxidized and reduced nucleotide cofactors alters Kv channel gating and may contribute to dynamic fine tuning of cell excitability. Contributes to the regulation of nerve signaling, and prevents neuronal hyperexcitability. In Mus musculus (Mouse), this protein is Voltage-gated potassium channel subunit beta-2.